The following is a 468-amino-acid chain: ATP synthase subunit beta 1 (468 aa).

Position 155-162 (155-162) interacts with ATP; that stretch reads GGAGVGKT.

It belongs to the ATPase alpha/beta chains family. As to quaternary structure, F-type ATPases have 2 components, CF(1) - the catalytic core - and CF(0) - the membrane proton channel. CF(1) has five subunits: alpha(3), beta(3), gamma(1), delta(1), epsilon(1). CF(0) has three main subunits: a(1), b(2) and c(9-12). The alpha and beta chains form an alternating ring which encloses part of the gamma chain. CF(1) is attached to CF(0) by a central stalk formed by the gamma and epsilon chains, while a peripheral stalk is formed by the delta and b chains.

It is found in the cell inner membrane. It catalyses the reaction ATP + H2O + 4 H(+)(in) = ADP + phosphate + 5 H(+)(out). Produces ATP from ADP in the presence of a proton gradient across the membrane. The catalytic sites are hosted primarily by the beta subunits. This chain is ATP synthase subunit beta 1, found in Syntrophotalea carbinolica (strain DSM 2380 / NBRC 103641 / GraBd1) (Pelobacter carbinolicus).